The primary structure comprises 491 residues: Eupatolide synthase (491 aa).

A helical; Signal-anchor for type II membrane protein membrane pass occupies residues 7-27; that stretch reads LPSWLLPAVVILTISCILMLW. Cys430 lines the heme pocket.

Belongs to the cytochrome P450 family. Heme serves as cofactor. Expressed in leaf primordia.

Its subcellular location is the membrane. It carries out the reaction 8beta-hydroxygermacra-1(10),4,11(13)-trien-12-oate + reduced [NADPH--hemoprotein reductase] + O2 = eupatolide + oxidized [NADPH--hemoprotein reductase] + 2 H2O. It functions in the pathway secondary metabolite biosynthesis; terpenoid biosynthesis. Functionally, involved in the biosynthesis of germacrene-derived sesquiterpene lactones. Hydroxylates 8-beta-hydroxy-germacrene A acid to 6-alpha,8-beta-hydroxy-germacrene A acid, which, in turn, undergo spontaneous lactonization to become eupatolide. The protein is Eupatolide synthase of Helianthus annuus (Common sunflower).